A 778-amino-acid polypeptide reads, in one-letter code: ATP synthase subunit beta (778 aa).

The unknown stretch occupies residues 1 to 289 (MKENNKTIEA…IDIYEENEDL (289 aa)). The segment at 290 to 778 (MKLNTLKSDK…KPLNSENKSN (489 aa)) is ATP synthase subunit beta. 447-454 (GGAGVGKT) contributes to the ATP binding site.

This sequence belongs to the ATPase alpha/beta chains family. F-type ATPases have 2 components, CF(1) - the catalytic core - and CF(0) - the membrane proton channel. CF(1) has five subunits: alpha(3), beta(3), gamma(1), delta(1), epsilon(1). CF(0) has three main subunits: a(1), b(2) and c(9-12). The alpha and beta chains form an alternating ring which encloses part of the gamma chain. CF(1) is attached to CF(0) by a central stalk formed by the gamma and epsilon chains, while a peripheral stalk is formed by the delta and b chains.

Its subcellular location is the cell membrane. It catalyses the reaction ATP + H2O + 4 H(+)(in) = ADP + phosphate + 5 H(+)(out). Produces ATP from ADP in the presence of a proton gradient across the membrane. The catalytic sites are hosted primarily by the beta subunits. The protein is ATP synthase subunit beta (atpD) of Malacoplasma penetrans (strain HF-2) (Mycoplasma penetrans).